Reading from the N-terminus, the 172-residue chain is Large ribosomal subunit protein uL10 (172 aa).

The protein belongs to the universal ribosomal protein uL10 family. As to quaternary structure, part of the ribosomal stalk of the 50S ribosomal subunit. The N-terminus interacts with L11 and the large rRNA to form the base of the stalk. The C-terminus forms an elongated spine to which L12 dimers bind in a sequential fashion forming a multimeric L10(L12)X complex.

Its function is as follows. Forms part of the ribosomal stalk, playing a central role in the interaction of the ribosome with GTP-bound translation factors. The protein is Large ribosomal subunit protein uL10 of Beijerinckia indica subsp. indica (strain ATCC 9039 / DSM 1715 / NCIMB 8712).